Reading from the N-terminus, the 379-residue chain is uncharacterized protein (379 aa).

Disordered stretches follow at residues 1–37 (MSSIQGKGTAGPSPEGIPNSREDGEMNPEGVTISGQT), 130–150 (VRYSSGRHGMDRNKSSSLSPE), and 332–379 (NPPI…RGSR).

The protein belongs to the chlamydial CPn_0499/CT_392/TC_0671 family.

This is an uncharacterized protein from Chlamydia muridarum (strain MoPn / Nigg).